The chain runs to 1496 residues: Synaptojanin-2 (1496 aa).

The 325-residue stretch at 120–444 (LKKILSSGVF…GHSLSKVFTG (325 aa)) folds into the SAC domain. An RRM domain is found at 889 to 968 (DATVVVNLQS…RAVKIRPKTK (80 aa)). Disordered regions lie at residues 1027–1073 (NQPG…DDAD), 1085–1166 (GEFR…YNVK), 1190–1405 (ASEE…PEAA), and 1427–1473 (NTWL…KTLG). Pro residues predominate over residues 1101–1115 (RPRPPQPPQRPPPPT). A phosphoserine mark is found at serine 1124 and serine 1191. The span at 1124-1140 (SDASISSGTHGQYSILQ) shows a compositional bias: polar residues. Pro residues-rich tracts occupy residues 1221–1235 (PQAP…PPRV) and 1319–1332 (VPPP…VPKV). Positions 1340–1359 (APAAFHLQVLQSNSQLLQGL) are enriched in low complexity. Polar residues-rich tracts occupy residues 1383-1394 (FLSTSSATSPDS) and 1427-1442 (NTWL…SGTR).

This sequence belongs to the synaptojanin family. In the central section; belongs to the inositol 1,4,5-trisphosphate 5-phosphatase family. As to quaternary structure, binds to GRB2. Isoform 2A binds to SYNJ2BP/OMP25. Isoform 2B2 C-terminal proline-rich region binds to a variety of SH3 domain-containing proteins including SH3GL1, SH3GL2, SH3GL3 and GRB2.

It is found in the cytoplasm. The protein resides in the cell membrane. The protein localises to the membrane raft. Its subcellular location is the presynapse. It localises to the cytoskeleton. The catalysed reaction is a 1,2-diacyl-sn-glycero-3-phospho-(1D-myo-inositol-4,5-bisphosphate) + H2O = a 1,2-diacyl-sn-glycero-3-phospho-(1D-myo-inositol 4-phosphate) + phosphate. Its function is as follows. Inositol 5-phosphatase which may be involved in distinct membrane trafficking and signal transduction pathways. May mediate the inhibitory effect of Rac1 on endocytosis. This chain is Synaptojanin-2 (SYNJ2), found in Homo sapiens (Human).